Reading from the N-terminus, the 299-residue chain is NADH-cytochrome b5 reductase 2 (299 aa).

A helical membrane pass occupies residues 13–35 (SFKVLAPFAAAVGSVGIAYQYST). The 105-residue stretch at 50-154 (DEWIDLKLAK…KGPVVKWKWE (105 aa)) folds into the FAD-binding FR-type domain. An FAD-binding site is contributed by 157–192 (QYKSIALIGGGTGITPLYQLMHEITKNPEDKTKVNL).

Belongs to the flavoprotein pyridine nucleotide cytochrome reductase family. FAD is required as a cofactor.

It localises to the mitochondrion outer membrane. The catalysed reaction is 2 Fe(III)-[cytochrome b5] + NADH = 2 Fe(II)-[cytochrome b5] + NAD(+) + H(+). Functionally, may mediate the reduction of outer membrane cytochrome b5. The chain is NADH-cytochrome b5 reductase 2 (MCR1) from Debaryomyces hansenii (strain ATCC 36239 / CBS 767 / BCRC 21394 / JCM 1990 / NBRC 0083 / IGC 2968) (Yeast).